A 416-amino-acid chain; its full sequence is 4-hydroxy-3-methylbut-2-en-1-yl diphosphate synthase (flavodoxin) (416 aa).

C304, C307, C350, and E357 together coordinate [4Fe-4S] cluster.

This sequence belongs to the IspG family. It depends on [4Fe-4S] cluster as a cofactor.

The enzyme catalyses (2E)-4-hydroxy-3-methylbut-2-enyl diphosphate + oxidized [flavodoxin] + H2O + 2 H(+) = 2-C-methyl-D-erythritol 2,4-cyclic diphosphate + reduced [flavodoxin]. It functions in the pathway isoprenoid biosynthesis; isopentenyl diphosphate biosynthesis via DXP pathway; isopentenyl diphosphate from 1-deoxy-D-xylulose 5-phosphate: step 5/6. In terms of biological role, converts 2C-methyl-D-erythritol 2,4-cyclodiphosphate (ME-2,4cPP) into 1-hydroxy-2-methyl-2-(E)-butenyl 4-diphosphate. The protein is 4-hydroxy-3-methylbut-2-en-1-yl diphosphate synthase (flavodoxin) of Allorhizobium ampelinum (strain ATCC BAA-846 / DSM 112012 / S4) (Agrobacterium vitis (strain S4)).